Consider the following 270-residue polypeptide: Phosphatidylinositol transfer protein alpha isoform (270 aa).

Thr58, Lys60, Glu85, Asn89, Thr96, and Lys194 together coordinate a 1,2-diacyl-sn-glycero-3-phospho-(1D-myo-inositol). An N6-acetyllysine modification is found at Lys215. A compositionally biased stretch (basic and acidic residues) spans 250–263 (TKRQLDEMRQKDPV). The interval 250 to 270 (TKRQLDEMRQKDPVKGMTADD) is disordered.

It belongs to the PtdIns transfer protein family. PI transfer class I subfamily. Phosphorylated by PKC in a calcium and phosphatidylserine-dependent manner.

The protein resides in the cytoplasm. Its subcellular location is the nucleus. It carries out the reaction a 1,2-diacyl-sn-glycero-3-phosphocholine(in) = a 1,2-diacyl-sn-glycero-3-phosphocholine(out). It catalyses the reaction a 1,2-diacyl-sn-glycero-3-phospho-(1D-myo-inositol)(in) = a 1,2-diacyl-sn-glycero-3-phospho-(1D-myo-inositol)(out). Functionally, catalyzes the transfer of phosphatidylinositol (PI) and phosphatidylcholine (PC) between membranes. Shows a preference for PI and PC containing shorter saturated or monosaturated acyl chains at the sn-1 and sn-2 positions. Preference order for PC is C16:1 &gt; C16:0 &gt; C18:1 &gt; C18:0 &gt; C20:4 and for PI is C16:1 &gt; C16:0 &gt; C18:1 &gt; C18:0 &gt; C20:4 &gt; C20:3. The polypeptide is Phosphatidylinositol transfer protein alpha isoform (PITPNA) (Oryctolagus cuniculus (Rabbit)).